Consider the following 601-residue polypeptide: Tubulin polyglutamylase ttll-4 (601 aa).

The span at 1-18 shows a compositional bias: polar residues; sequence MSSGYSSAPSVSHTSSDT. The tract at residues 1–37 is disordered; sequence MSSGYSSAPSVSHTSSDTDLNRIDSYDDGAEETTDEQ. A TTL domain is found at 138-476; sequence QARLTWCHNS…YVPPSFDKLS (339 aa). ATP contacts are provided by residues K254, 260 to 261, 282 to 285, and 295 to 297; these read RG, QHYI, and KFD. R260 is an a protein binding site. R321 lines the L-glutamate pocket. 342-343 contacts ATP; that stretch reads TN. Residues Y344, S345, and K362 each coordinate L-glutamate. Mg(2+) is bound by residues D422, E435, and N437. K453 provides a ligand contact to L-glutamate.

Belongs to the tubulin--tyrosine ligase family. The cofactor is Mg(2+). Expressed in many sensory neurons in amphid.

The catalysed reaction is L-glutamyl-[protein] + L-glutamate + ATP = gamma-L-glutamyl-L-glutamyl-[protein] + ADP + phosphate + H(+). In terms of biological role, monoglutamylase which modifies tubulin, adding a single glutamate on the gamma-carboxyl group of specific glutamate residues of target proteins. Involved in the side-chain initiation step of the polyglutamylation reaction but not in the elongation step. Preferentially modifies beta-tail tubulin over the alpha-tubulin. Involved in side-chain glutamylation of tubulin in sensory cilia. Together with ttll-5 and ttll-11, required for male mating. This chain is Tubulin polyglutamylase ttll-4, found in Caenorhabditis elegans.